We begin with the raw amino-acid sequence, 329 residues long: Phosphate acetyltransferase (329 aa).

This sequence belongs to the phosphate acetyltransferase and butyryltransferase family.

The protein localises to the cytoplasm. It catalyses the reaction acetyl-CoA + phosphate = acetyl phosphate + CoA. The protein operates within metabolic intermediate biosynthesis; acetyl-CoA biosynthesis; acetyl-CoA from acetate: step 2/2. This chain is Phosphate acetyltransferase (pta), found in Staphylococcus epidermidis (strain ATCC 12228 / FDA PCI 1200).